The primary structure comprises 258 residues: Phosphate import ATP-binding protein PstB (258 aa).

The 241-residue stretch at 13-253 (IKIENLNLWY…PREKSTEDYI (241 aa)) folds into the ABC transporter domain. 45 to 52 (GPSGCGKS) serves as a coordination point for ATP.

This sequence belongs to the ABC transporter superfamily. Phosphate importer (TC 3.A.1.7) family. In terms of assembly, the complex is composed of two ATP-binding proteins (PstB), two transmembrane proteins (PstC and PstA) and a solute-binding protein (PstS).

It is found in the cell membrane. The enzyme catalyses phosphate(out) + ATP + H2O = ADP + 2 phosphate(in) + H(+). Part of the ABC transporter complex PstSACB involved in phosphate import. Responsible for energy coupling to the transport system. This is Phosphate import ATP-binding protein PstB from Methanosarcina barkeri (strain Fusaro / DSM 804).